The following is a 305-amino-acid chain: Ribosomal RNA small subunit methyltransferase H (305 aa).

Residues 37–39 (GGH), D57, F85, D101, and H108 contribute to the S-adenosyl-L-methionine site.

It belongs to the methyltransferase superfamily. RsmH family.

Its subcellular location is the cytoplasm. The catalysed reaction is cytidine(1402) in 16S rRNA + S-adenosyl-L-methionine = N(4)-methylcytidine(1402) in 16S rRNA + S-adenosyl-L-homocysteine + H(+). In terms of biological role, specifically methylates the N4 position of cytidine in position 1402 (C1402) of 16S rRNA. This is Ribosomal RNA small subunit methyltransferase H from Parabacteroides distasonis (strain ATCC 8503 / DSM 20701 / CIP 104284 / JCM 5825 / NCTC 11152).